The following is a 331-amino-acid chain: Ferredoxin--NADP reductase (331 aa).

Positions 34, 42, 47, 87, 120, 285, and 325 each coordinate FAD.

The protein belongs to the ferredoxin--NADP reductase type 2 family. In terms of assembly, homodimer. FAD serves as cofactor.

The enzyme catalyses 2 reduced [2Fe-2S]-[ferredoxin] + NADP(+) + H(+) = 2 oxidized [2Fe-2S]-[ferredoxin] + NADPH. The sequence is that of Ferredoxin--NADP reductase from Levilactobacillus brevis (strain ATCC 367 / BCRC 12310 / CIP 105137 / JCM 1170 / LMG 11437 / NCIMB 947 / NCTC 947) (Lactobacillus brevis).